An 84-amino-acid polypeptide reads, in one-letter code: UPF0457 protein BT9727_3043 (84 aa).

It belongs to the UPF0457 family.

This Bacillus thuringiensis subsp. konkukian (strain 97-27) protein is UPF0457 protein BT9727_3043.